A 696-amino-acid polypeptide reads, in one-letter code: Lutropin-choriogonadotropic hormone receptor (696 aa).

The signal sequence occupies residues 1–27 (MRRRSLALRLLLALLLLPPPLPQTLLG). Residues 28–358 (APCPEPCSCR…AFNPCEDIMG (331 aa)) lie on the Extracellular side of the membrane. Asn-99 carries an N-linked (GlcNAc...) asparagine glycan. LRR repeat units lie at residues 122-147 (LPRLKYLSICNTGIRKLPDVTKIFSS), 149-171 (FNFILEICDNLHITTVPANAFQG), 172-196 (MNNESITLKLYGNGFEEIQSHAFNG), 198-220 (TLISLELKENAHLKKMHNDAFRG), 221-244 (ARGPSILDISSTKLQALPSYGLES), and 250-271 (ATSSYSLKKLPSREKFTNLLDA). Residues Asn-174 and Asn-195 are each glycosylated (N-linked (GlcNAc...) asparagine). 3 N-linked (GlcNAc...) asparagine glycosylation sites follow: Asn-291, Asn-299, and Asn-313. Tyr-331 carries the post-translational modification Sulfotyrosine. Residues 359–386 (YDFLRVLIWLINILAIMGNVTVLFVLLT) form a helical membrane-spanning segment. Residues 387 to 395 (SHYKLTVPR) lie on the Cytoplasmic side of the membrane. The chain crosses the membrane as a helical span at residues 396-418 (FLMCNLSFADFCMGLYLLLIASV). The Extracellular segment spans residues 419–439 (DAQTKGQYYNHAIDWQTGNGC). Cys-439 and Cys-514 form a disulfide bridge. Residues 440–462 (SVAGFFTVFASELSVYTLTVITL) traverse the membrane as a helical segment. At 463–482 (ERWHTITYAIQLDQKLRLRH) the chain is on the cytoplasmic side. Residues 483–505 (AIPIMLGGWLFSTLIAMLPLVGV) form a helical membrane-spanning segment. The Extracellular portion of the chain corresponds to 506–525 (SSYMKVSICLPMDVETTLSQ). Residues 526–547 (VYILTILILNVVAFIIICACYI) traverse the membrane as a helical segment. The Cytoplasmic segment spans residues 548 to 570 (KIYFAVQNPELMATNKDTKIAKK). The helical transmembrane segment at 571-594 (MAVLIFTDFTCMAPISFFAISAAL) threads the bilayer. Residues 595–605 (KVPLITVTNSK) lie on the Extracellular side of the membrane. Residues 606-626 (VLLVLFYPVNSCANPFLYAIF) traverse the membrane as a helical segment. Over 627–696 (TKAFRRDFFL…VMDKTCYKDC (70 aa)) the chain is Cytoplasmic. S-palmitoyl cysteine attachment occurs at residues Cys-643 and Cys-644.

This sequence belongs to the G-protein coupled receptor 1 family. FSH/LSH/TSH subfamily. Sulfated.

It localises to the cell membrane. Receptor for lutropin-choriogonadotropic hormone. The activity of this receptor is mediated by G proteins which activate adenylate cyclase. The polypeptide is Lutropin-choriogonadotropic hormone receptor (LHCGR) (Sus scrofa (Pig)).